The chain runs to 154 residues: Myoglobin (154 aa).

Residues 2 to 148 (GLSDGEWQLV…FRKDMASNYK (147 aa)) form the Globin domain. Ser4 is modified (phosphoserine). His65 is a binding site for nitrite. Residue His65 participates in O2 binding. Thr68 bears the Phosphothreonine mark. His94 is a binding site for heme b.

Belongs to the globin family. Monomeric.

Its subcellular location is the cytoplasm. It localises to the sarcoplasm. The catalysed reaction is Fe(III)-heme b-[protein] + nitric oxide + H2O = Fe(II)-heme b-[protein] + nitrite + 2 H(+). It carries out the reaction H2O2 + AH2 = A + 2 H2O. Functionally, monomeric heme protein which primary function is to store oxygen and facilitate its diffusion within muscle tissues. Reversibly binds oxygen through a pentacoordinated heme iron and enables its timely and efficient release as needed during periods of heightened demand. Depending on the oxidative conditions of tissues and cells, and in addition to its ability to bind oxygen, it also has a nitrite reductase activity whereby it regulates the production of bioactive nitric oxide. Under stress conditions, like hypoxia and anoxia, it also protects cells against reactive oxygen species thanks to its pseudoperoxidase activity. This is Myoglobin (MB) from Pan troglodytes (Chimpanzee).